A 477-amino-acid polypeptide reads, in one-letter code: Bifunctional protein HldE (477 aa).

A ribokinase region spans residues 1-319 (MTVIFPNFSK…NIMNSHICTT (319 aa)). 195-198 (NISE) contacts ATP. Aspartate 264 is a catalytic residue. Residues 346–477 (MTNGVFDILH…NIINAIKRKN (132 aa)) are cytidylyltransferase.

It in the N-terminal section; belongs to the carbohydrate kinase PfkB family. The protein in the C-terminal section; belongs to the cytidylyltransferase family. As to quaternary structure, homodimer.

It catalyses the reaction D-glycero-beta-D-manno-heptose 7-phosphate + ATP = D-glycero-beta-D-manno-heptose 1,7-bisphosphate + ADP + H(+). The enzyme catalyses D-glycero-beta-D-manno-heptose 1-phosphate + ATP + H(+) = ADP-D-glycero-beta-D-manno-heptose + diphosphate. It participates in nucleotide-sugar biosynthesis; ADP-L-glycero-beta-D-manno-heptose biosynthesis; ADP-L-glycero-beta-D-manno-heptose from D-glycero-beta-D-manno-heptose 7-phosphate: step 1/4. Its pathway is nucleotide-sugar biosynthesis; ADP-L-glycero-beta-D-manno-heptose biosynthesis; ADP-L-glycero-beta-D-manno-heptose from D-glycero-beta-D-manno-heptose 7-phosphate: step 3/4. Catalyzes the phosphorylation of D-glycero-D-manno-heptose 7-phosphate at the C-1 position to selectively form D-glycero-beta-D-manno-heptose-1,7-bisphosphate. Its function is as follows. Catalyzes the ADP transfer from ATP to D-glycero-beta-D-manno-heptose 1-phosphate, yielding ADP-D-glycero-beta-D-manno-heptose. The polypeptide is Bifunctional protein HldE (Blochmanniella pennsylvanica (strain BPEN)).